The chain runs to 181 residues: Peptidyl-tRNA hydrolase (181 aa).

Tyr14 contacts tRNA. The active-site Proton acceptor is His19. 3 residues coordinate tRNA: Tyr60, Asn62, and Asn108.

It belongs to the PTH family. Monomer.

The protein localises to the cytoplasm. The enzyme catalyses an N-acyl-L-alpha-aminoacyl-tRNA + H2O = an N-acyl-L-amino acid + a tRNA + H(+). In terms of biological role, hydrolyzes ribosome-free peptidyl-tRNAs (with 1 or more amino acids incorporated), which drop off the ribosome during protein synthesis, or as a result of ribosome stalling. Catalyzes the release of premature peptidyl moieties from peptidyl-tRNA molecules trapped in stalled 50S ribosomal subunits, and thus maintains levels of free tRNAs and 50S ribosomes. The protein is Peptidyl-tRNA hydrolase of Metamycoplasma arthritidis (strain 158L3-1) (Mycoplasma arthritidis).